A 120-amino-acid polypeptide reads, in one-letter code: Large ribosomal subunit protein bL21 (120 aa).

The protein belongs to the bacterial ribosomal protein bL21 family. In terms of assembly, part of the 50S ribosomal subunit. Contacts protein L20.

In terms of biological role, this protein binds to 23S rRNA in the presence of protein L20. This chain is Large ribosomal subunit protein bL21, found in Roseiflexus sp. (strain RS-1).